The sequence spans 401 residues: Tryptophan synthase beta chain (401 aa).

Lys91 carries the N6-(pyridoxal phosphate)lysine modification.

It belongs to the TrpB family. In terms of assembly, tetramer of two alpha and two beta chains. Requires pyridoxal 5'-phosphate as cofactor.

The enzyme catalyses (1S,2R)-1-C-(indol-3-yl)glycerol 3-phosphate + L-serine = D-glyceraldehyde 3-phosphate + L-tryptophan + H2O. It functions in the pathway amino-acid biosynthesis; L-tryptophan biosynthesis; L-tryptophan from chorismate: step 5/5. Functionally, the beta subunit is responsible for the synthesis of L-tryptophan from indole and L-serine. The sequence is that of Tryptophan synthase beta chain from Lactococcus lactis subsp. cremoris (strain MG1363).